The chain runs to 140 residues: Large ribosomal subunit protein uL16 (140 aa).

This sequence belongs to the universal ribosomal protein uL16 family. As to quaternary structure, part of the 50S ribosomal subunit.

In terms of biological role, binds 23S rRNA and is also seen to make contacts with the A and possibly P site tRNAs. The protein is Large ribosomal subunit protein uL16 of Phytoplasma australiense.